The chain runs to 72 residues: MPEVKSMFREVLPKQGQLSMEDVPTMVLCKPKLLPLKSVTLEKLEKMQKDAQEIIRQQELALKEQPPSEKAE.

The protein belongs to the BBIP10 family.

The protein resides in the cell projection. Its subcellular location is the cilium. The protein localises to the cytoplasm. In terms of biological role, required for primary cilia assembly. The chain is BBSome-interacting protein 1 (bbip1) from Danio rerio (Zebrafish).